Reading from the N-terminus, the 446-residue chain is Hepatocyte nuclear factor 4-beta (446 aa).

Positions 47–122 form a DNA-binding region, nuclear receptor; sequence NSFCAICGDR…AGMKKEAVQN (76 aa). 2 consecutive NR C4-type zinc fingers follow at residues 50–70 and 86–110; these read CAIC…CDGC and CRFS…LRKC. Positions 137-366 constitute an NR LBD domain; it reads NGSLSINVLT…SLLQELLLGG (230 aa).

It belongs to the nuclear hormone receptor family. NR2 subfamily. In terms of assembly, homodimerization is required for HNF4-alpha to bind to its recognition site. Expressed in liver, kidney, stomach, intestine, lung, ovary, and testis. Not expressed in fat, muscle and brain.

The protein localises to the nucleus. In terms of biological role, transcription factor; binds and activates the promoter for the HNF1-alpha gene. Seems to have a lower DNA binding activity than HNF4-alpha and is a weaker transactivator than the alpha isoform. The sequence is that of Hepatocyte nuclear factor 4-beta (hnf4b) from Xenopus laevis (African clawed frog).